The primary structure comprises 384 residues: NADH-quinone oxidoreductase subunit D 2 (384 aa).

This sequence belongs to the complex I 49 kDa subunit family. NDH-1 is composed of 14 different subunits. Subunits NuoB, C, D, E, F, and G constitute the peripheral sector of the complex.

The protein localises to the cell membrane. It carries out the reaction a quinone + NADH + 5 H(+)(in) = a quinol + NAD(+) + 4 H(+)(out). In terms of biological role, NDH-1 shuttles electrons from NADH, via FMN and iron-sulfur (Fe-S) centers, to quinones in the respiratory chain. The immediate electron acceptor for the enzyme in this species is believed to be a menaquinone. Couples the redox reaction to proton translocation (for every two electrons transferred, four hydrogen ions are translocated across the cytoplasmic membrane), and thus conserves the redox energy in a proton gradient. This is NADH-quinone oxidoreductase subunit D 2 from Symbiobacterium thermophilum (strain DSM 24528 / JCM 14929 / IAM 14863 / T).